A 296-amino-acid chain; its full sequence is 4-hydroxy-tetrahydrodipicolinate synthase (296 aa).

Threonine 49 is a pyruvate binding site. Tyrosine 137 serves as the catalytic Proton donor/acceptor. Catalysis depends on lysine 165, which acts as the Schiff-base intermediate with substrate. Valine 207 is a binding site for pyruvate.

This sequence belongs to the DapA family. As to quaternary structure, homotetramer; dimer of dimers.

Its subcellular location is the cytoplasm. It carries out the reaction L-aspartate 4-semialdehyde + pyruvate = (2S,4S)-4-hydroxy-2,3,4,5-tetrahydrodipicolinate + H2O + H(+). The protein operates within amino-acid biosynthesis; L-lysine biosynthesis via DAP pathway; (S)-tetrahydrodipicolinate from L-aspartate: step 3/4. Its function is as follows. Catalyzes the condensation of (S)-aspartate-beta-semialdehyde [(S)-ASA] and pyruvate to 4-hydroxy-tetrahydrodipicolinate (HTPA). The protein is 4-hydroxy-tetrahydrodipicolinate synthase of Nitrobacter hamburgensis (strain DSM 10229 / NCIMB 13809 / X14).